Consider the following 189-residue polypeptide: Ornithine decarboxylase antizyme 2 (189 aa).

Position 186 is a phosphoserine (serine 186).

It belongs to the ODC antizyme family. As to quaternary structure, interacts with ODC1 and thereby sterically blocks ODC homodimerization. Interacts with AZIN2; this interaction disrupts the interaction between the antizyme and ODC1.

The protein resides in the nucleus. Its function is as follows. Ornithine decarboxylase (ODC) antizyme protein that negatively regulates ODC activity and intracellular polyamine biosynthesis and uptake in response to increased intracellular polyamine levels. Binds to ODC monomers, inhibiting the assembly of the functional ODC homodimers. Does not target the ODC monomers for degradation, which allows a protein synthesis-independent restoration of ODC activity. Involved in the translocation of AZIN2 from ER-Golgi intermediate compartment (ERGIC) to the cytosol. This chain is Ornithine decarboxylase antizyme 2 (Oaz2), found in Mus musculus (Mouse).